The chain runs to 240 residues: Eukaryotic translation initiation factor 3 subunit J (240 aa).

The tract at residues 19–95 (KADVNKWAGE…FANMTPEQQL (77 aa)) is disordered. A compositionally biased stretch (acidic residues) spans 28 to 45 (EDEDDVKDNWEDDDEEEE). Residues 46–56 (KKDAPKQEDTP) are compositionally biased toward basic and acidic residues. The span at 60 to 71 (AKPKKAAQQKKL) shows a compositional bias: basic residues. Coiled coils occupy residues 63 to 90 (KKAA…ANMT) and 176 to 235 (SNNI…DYDD). Over residues 72-81 (KKEDLERLQR) the composition is skewed to basic and acidic residues.

It belongs to the eIF-3 subunit J family. As to quaternary structure, component of the eukaryotic translation initiation factor 3 (eIF-3) complex.

Its subcellular location is the cytoplasm. Component of the eukaryotic translation initiation factor 3 (eIF-3) complex, which is involved in protein synthesis of a specialized repertoire of mRNAs and, together with other initiation factors, stimulates binding of mRNA and methionyl-tRNAi to the 40S ribosome. The eIF-3 complex specifically targets and initiates translation of a subset of mRNAs involved in cell proliferation. The sequence is that of Eukaryotic translation initiation factor 3 subunit J from Anopheles gambiae (African malaria mosquito).